A 116-amino-acid polypeptide reads, in one-letter code: Integration host factor subunit alpha (116 aa).

Disordered stretches follow at residues 58-80 and 94-116; these read FGNF…GETI and QKLK…EAAE. The span at 94–105 shows a compositional bias: polar residues; that stretch reads QKLKSTVEQSGN.

The protein belongs to the bacterial histone-like protein family. In terms of assembly, heterodimer of an alpha and a beta chain.

This protein is one of the two subunits of integration host factor, a specific DNA-binding protein that functions in genetic recombination as well as in transcriptional and translational control. The sequence is that of Integration host factor subunit alpha from Bordetella avium (strain 197N).